The primary structure comprises 401 residues: Multidrug resistance protein MdtH (401 aa).

The next 11 membrane-spanning stretches (helical) occupy residues 13 to 33 (YFLIIDNMFVVIGFYAVFPLI), 34 to 54 (SIHFVEQLGWTAFLVGFALGL), 88 to 108 (IGFIIMSLAHTPTLLCAACIL), 139 to 159 (ILMLEDSICAIIGITLGSWLL), 164 to 184 (FQLVCLTGAILFFIAGMFNAW), 211 to 231 (FIIYTLTLSGYYILSAQVMLM), 248 to 268 (YIYITEAILSLLLIIPITYWM), 275 to 295 (ETRLMLGLVIMIISLSPIGSV), 298 to 318 (LYELLILISLFYIGSIVAEPA), 341 to 361 (LSLALGGTLGYSGGGWLYDLG), and 366 to 386 (FYQLPWIALSIIGTITVLILY).

Belongs to the major facilitator superfamily. DHA1 family. MdtH (TC 2.A.1.2.21) subfamily.

The protein localises to the cell inner membrane. The sequence is that of Multidrug resistance protein MdtH from Blochmanniella floridana.